The sequence spans 209 residues: Uracil phosphoribosyltransferase (209 aa).

Residues Arg79, Arg104, and Asp131 to Thr139 contribute to the 5-phospho-alpha-D-ribose 1-diphosphate site. Residues Ile194 and Gly199–Ala201 contribute to the uracil site. Asp200 contributes to the 5-phospho-alpha-D-ribose 1-diphosphate binding site.

It belongs to the UPRTase family. It depends on Mg(2+) as a cofactor.

The enzyme catalyses UMP + diphosphate = 5-phospho-alpha-D-ribose 1-diphosphate + uracil. It participates in pyrimidine metabolism; UMP biosynthesis via salvage pathway; UMP from uracil: step 1/1. Allosterically activated by GTP. Catalyzes the conversion of uracil and 5-phospho-alpha-D-ribose 1-diphosphate (PRPP) to UMP and diphosphate. In Caulobacter sp. (strain K31), this protein is Uracil phosphoribosyltransferase.